The following is a 260-amino-acid chain: MISSLWIAKTGLDAQQTNMDVIANNLANVSTNGFKRQRAVFEDLLYQTIRQPGAQSSEQTTLPSGLQIGTGVRPVATERLHSQGNLSQTNNSKDVAIKGQGFFQVMLPDGSSAYTRDGSFQVDQNGQLVTAGGFQVQPAITIPANALSITIGRDGVVSVTQQGQAAPVQVGQLNLTTFMNDTGLESIGENLYTETQSSGAPNESTPGLNGAGLLYQGYVETSNVNVAEELVNMIQVQRAYEINSKAVSTTDQMLQKLTQL.

The protein belongs to the flagella basal body rod proteins family. The basal body constitutes a major portion of the flagellar organelle and consists of four rings (L,P,S, and M) mounted on a central rod. The rod consists of about 26 subunits of FlgG in the distal portion, and FlgB, FlgC and FlgF are thought to build up the proximal portion of the rod with about 6 subunits each.

The protein localises to the bacterial flagellum basal body. The sequence is that of Flagellar basal-body rod protein FlgG (flgG) from Escherichia coli O157:H7.